The sequence spans 367 residues: UDP-N-acetylenolpyruvoylglucosamine reductase (367 aa).

One can recognise an FAD-binding PCMH-type domain in the interval 29–205 (VGPVAQRVIT…LEVEFKLDAS (177 aa)). The active site involves arginine 177. The active-site Proton donor is the serine 260. Residue glutamate 359 is part of the active site.

This sequence belongs to the MurB family. It depends on FAD as a cofactor.

Its subcellular location is the cytoplasm. The enzyme catalyses UDP-N-acetyl-alpha-D-muramate + NADP(+) = UDP-N-acetyl-3-O-(1-carboxyvinyl)-alpha-D-glucosamine + NADPH + H(+). Its pathway is cell wall biogenesis; peptidoglycan biosynthesis. Cell wall formation. This is UDP-N-acetylenolpyruvoylglucosamine reductase from Mycobacterium leprae (strain Br4923).